A 728-amino-acid polypeptide reads, in one-letter code: Leucine-rich repeat and calponin homology domain-containing protein 1 (728 aa).

Positions H24–H36 are enriched in basic residues. A disordered region spans residues H24–L57. Gly residues predominate over residues G37 to G54. LRR repeat units lie at residues D98–F119, S121–Q143, M144–P166, L167–L187, Q189–L210, S212–S234, L235–M255, Q257–K278, and I283–T304. Residues H311–D322 show a composition bias toward basic and acidic residues. The tract at residues H311 to N348 is disordered. The residue at position 370 (S370) is a Phosphoserine. Residues H377–D398 are disordered. At S409 the chain carries Phosphoserine. Residues L516–P525 show a composition bias toward polar residues. Positions L516–L547 are disordered. S532 and S536 each carry phosphoserine. Residues P533–A543 show a composition bias toward polar residues. T568 is modified (phosphothreonine). Residues M576–P692 enclose the Calponin-homology (CH) domain.

As to quaternary structure, interacts (via LRR repeats) with unphosphorylated DOCK8 (via DHR-2 domain); the interaction prevents the interaction between DOCK8 and CDC42.

The protein localises to the cytoplasm. In terms of biological role, acts as a negative regulator of GTPase CDC42 by sequestering CDC42-guanine exchange factor DOCK8. Probably by preventing CDC42 activation, negatively regulates CD4(+) T-cell migration. This chain is Leucine-rich repeat and calponin homology domain-containing protein 1 (LRCH1), found in Homo sapiens (Human).